The following is a 362-amino-acid chain: 3-isopropylmalate dehydrogenase (362 aa).

78–91 lines the NAD(+) pocket; sequence GYKWDSLPPHQRPE. Residues Arg98, Arg108, Arg136, and Asp226 each coordinate substrate. Mg(2+) is bound by residues Asp226, Asp250, and Asp254. 284–296 is an NAD(+) binding site; sequence GSAPDIAGQDKAN.

This sequence belongs to the isocitrate and isopropylmalate dehydrogenases family. LeuB type 1 subfamily. As to quaternary structure, homodimer. Mg(2+) is required as a cofactor. The cofactor is Mn(2+).

Its subcellular location is the cytoplasm. It catalyses the reaction (2R,3S)-3-isopropylmalate + NAD(+) = 4-methyl-2-oxopentanoate + CO2 + NADH. It participates in amino-acid biosynthesis; L-leucine biosynthesis; L-leucine from 3-methyl-2-oxobutanoate: step 3/4. Functionally, catalyzes the oxidation of 3-carboxy-2-hydroxy-4-methylpentanoate (3-isopropylmalate) to 3-carboxy-4-methyl-2-oxopentanoate. The product decarboxylates to 4-methyl-2 oxopentanoate. The chain is 3-isopropylmalate dehydrogenase from Nostoc sp. (strain PCC 7120 / SAG 25.82 / UTEX 2576).